Consider the following 148-residue polypeptide: Angiogenin-1 (148 aa).

The signal sequence occupies residues 1 to 23 (MVMVLSPLLLVFILGLGLTPVAP). The active-site Proton acceptor is the H37. TRNA is bound at residue R45. 3 cysteine pairs are disulfide-bonded: C50–C105, C63–C116, and C81–C131. A Nucleolar localization signal motif is present at residues 55 to 59 (KNRRL). TRNA contacts are provided by C105 and I127. Residue H138 is the Proton donor of the active site.

The protein belongs to the pancreatic ribonuclease family. In terms of assembly, homodimer. Interacts with RNH1; inhibiting ANG ribonuclease activity. In terms of tissue distribution, serum and milk.

It localises to the secreted. It is found in the nucleus. Its subcellular location is the nucleolus. The protein localises to the cytoplasm. The protein resides in the stress granule. Functionally, secreted ribonuclease that can either promote or restrict cell proliferation of target cells, depending on the context. Endocytosed in target cells via its receptor PLXNB2 and translocates to the cytoplasm or nucleus. Under stress conditions, localizes to the cytoplasm and promotes the assembly of stress granules (SGs): specifically cleaves a subset of tRNAs within anticodon loops to produce tRNA-derived stress-induced fragments (tiRNAs), resulting in translation repression and inhibition of cell proliferation. tiRNas also prevent formation of apoptosome, thereby promoting cell survival. Preferentially cleaves RNAs between a pyrimidine and an adenosine residue, suggesting that it cleaves the anticodon loop of tRNA(Ala) (32-UUAGCAU-38) after positions 33 and 36. Cleaves a subset of tRNAs, including tRNA(Ala), tRNA(Glu), tRNA(Gly), tRNA(Lys), tRNA(Val), tRNA(His), tRNA(Asp) and tRNA(Sec). Under growth conditions and in differentiated cells, translocates to the nucleus and stimulates ribosomal RNA (rRNA) transcription, including that containing the initiation site sequences of 45S rRNA, thereby promoting cell growth and proliferation. Angiogenin induces vascularization of normal and malignant tissues via its ability to promote rRNA transcription. This is Angiogenin-1 (ANG1) from Bos taurus (Bovine).